A 336-amino-acid chain; its full sequence is NADH-quinone oxidoreductase subunit H (336 aa).

8 consecutive transmembrane segments (helical) span residues 4–24 (YILW…LVVA), 75–95 (YLFF…WAVI), 108–128 (LGLL…VIAG), 154–174 (MGFA…TGII), 181–201 (LWHW…IAGI), 233–253 (LFFL…SIMF), 272–292 (FVPG…MFLW), and 308–328 (LGWK…ACMV).

It belongs to the complex I subunit 1 family. NDH-1 is composed of 14 different subunits. Subunits NuoA, H, J, K, L, M, N constitute the membrane sector of the complex.

Its subcellular location is the cell inner membrane. The catalysed reaction is a quinone + NADH + 5 H(+)(in) = a quinol + NAD(+) + 4 H(+)(out). In terms of biological role, NDH-1 shuttles electrons from NADH, via FMN and iron-sulfur (Fe-S) centers, to quinones in the respiratory chain. The immediate electron acceptor for the enzyme in this species is believed to be ubiquinone. Couples the redox reaction to proton translocation (for every two electrons transferred, four hydrogen ions are translocated across the cytoplasmic membrane), and thus conserves the redox energy in a proton gradient. This subunit may bind ubiquinone. The sequence is that of NADH-quinone oxidoreductase subunit H from Francisella philomiragia subsp. philomiragia (strain ATCC 25017 / CCUG 19701 / FSC 153 / O#319-036).